The following is a 95-amino-acid chain: Aspartyl/glutamyl-tRNA(Asn/Gln) amidotransferase subunit C (95 aa).

The protein belongs to the GatC family. Heterotrimer of A, B and C subunits.

The catalysed reaction is L-glutamyl-tRNA(Gln) + L-glutamine + ATP + H2O = L-glutaminyl-tRNA(Gln) + L-glutamate + ADP + phosphate + H(+). It carries out the reaction L-aspartyl-tRNA(Asn) + L-glutamine + ATP + H2O = L-asparaginyl-tRNA(Asn) + L-glutamate + ADP + phosphate + 2 H(+). In terms of biological role, allows the formation of correctly charged Asn-tRNA(Asn) or Gln-tRNA(Gln) through the transamidation of misacylated Asp-tRNA(Asn) or Glu-tRNA(Gln) in organisms which lack either or both of asparaginyl-tRNA or glutaminyl-tRNA synthetases. The reaction takes place in the presence of glutamine and ATP through an activated phospho-Asp-tRNA(Asn) or phospho-Glu-tRNA(Gln). This Beijerinckia indica subsp. indica (strain ATCC 9039 / DSM 1715 / NCIMB 8712) protein is Aspartyl/glutamyl-tRNA(Asn/Gln) amidotransferase subunit C.